The following is a 225-amino-acid chain: Uridylate kinase (225 aa).

Gly9 to Ser10 contributes to the ATP binding site. Gly44 serves as a coordination point for UMP. Positions 45 and 49 each coordinate ATP. UMP contacts are provided by residues Asp66 and Thr114 to Thr120. Thr140, Asn141, Tyr146, and Asp149 together coordinate ATP.

The protein belongs to the UMP kinase family. In terms of assembly, homohexamer.

The protein localises to the cytoplasm. The catalysed reaction is UMP + ATP = UDP + ADP. Its pathway is pyrimidine metabolism; CTP biosynthesis via de novo pathway; UDP from UMP (UMPK route): step 1/1. Inhibited by UTP. Catalyzes the reversible phosphorylation of UMP to UDP. This Thermococcus sibiricus (strain DSM 12597 / MM 739) protein is Uridylate kinase.